Reading from the N-terminus, the 20-residue chain is Cytochrome c oxidase subunit 6A1, mitochondrial (20 aa).

This sequence belongs to the cytochrome c oxidase subunit 6A family. Component of the cytochrome c oxidase (complex IV, CIV), a multisubunit enzyme composed of 14 subunits. The complex is composed of a catalytic core of 3 subunits MT-CO1, MT-CO2 and MT-CO3, encoded in the mitochondrial DNA, and 11 supernumerary subunits COX4I, COX5A, COX5B, COX6A, COX6B, COX6C, COX7A, COX7B, COX7C, COX8 and NDUFA4, which are encoded in the nuclear genome. The complex exists as a monomer or a dimer and forms supercomplexes (SCs) in the inner mitochondrial membrane with NADH-ubiquinone oxidoreductase (complex I, CI) and ubiquinol-cytochrome c oxidoreductase (cytochrome b-c1 complex, complex III, CIII), resulting in different assemblies (supercomplex SCI(1)III(2)IV(1) and megacomplex MCI(2)III(2)IV(2)). As to expression, liver specific isoform.

It localises to the mitochondrion inner membrane. The protein operates within energy metabolism; oxidative phosphorylation. Its function is as follows. Component of the cytochrome c oxidase, the last enzyme in the mitochondrial electron transport chain which drives oxidative phosphorylation. The respiratory chain contains 3 multisubunit complexes succinate dehydrogenase (complex II, CII), ubiquinol-cytochrome c oxidoreductase (cytochrome b-c1 complex, complex III, CIII) and cytochrome c oxidase (complex IV, CIV), that cooperate to transfer electrons derived from NADH and succinate to molecular oxygen, creating an electrochemical gradient over the inner membrane that drives transmembrane transport and the ATP synthase. Cytochrome c oxidase is the component of the respiratory chain that catalyzes the reduction of oxygen to water. Electrons originating from reduced cytochrome c in the intermembrane space (IMS) are transferred via the dinuclear copper A center (CU(A)) of subunit 2 and heme A of subunit 1 to the active site in subunit 1, a binuclear center (BNC) formed by heme A3 and copper B (CU(B)). The BNC reduces molecular oxygen to 2 water molecules unsing 4 electrons from cytochrome c in the IMS and 4 protons from the mitochondrial matrix. The sequence is that of Cytochrome c oxidase subunit 6A1, mitochondrial (COX6A1) from Ovis aries (Sheep).